The sequence spans 484 residues: Sorting assembly machinery 50 kDa subunit (484 aa).

This sequence belongs to the SAM50/omp85 family. As to quaternary structure, component of the mitochondrial outer membrane sorting assembly machinery (SAM or TOB) complex, which at least consists of SAM35, SAM37 and SAM50. Associates with the mitochondrial contact site and cristae organizing system (MICOS) complex (also known as MINOS or MitOS complex).

Its subcellular location is the mitochondrion outer membrane. In terms of biological role, component of the mitochondrial outer membrane sorting assembly machinery (SAM or TOB) complex, which is required for the sorting of proteins with complicated topology, such as beta-barrel proteins, to the mitochondrial outer membrane after import by the TOM complex. This Saccharomyces cerevisiae (strain ATCC 204508 / S288c) (Baker's yeast) protein is Sorting assembly machinery 50 kDa subunit (SAM50).